We begin with the raw amino-acid sequence, 685 residues long: Amino acid transporter heavy chain SLC3A1 (685 aa).

A compositionally biased stretch (basic and acidic residues) spans 1-11 (MAEDKSKRDSI). The segment at 1 to 56 (MAEDKSKRDSIEMSMKGCQTNNGFVHNEDILEQTPDPGSSTDNLKHSTRGILGSQE) is disordered. At 1 to 87 (MAEDKSKRDS…GQARYRIPRE (87 aa)) the chain is on the cytoplasmic side. The residue at position 10 (Ser-10) is a Phosphoserine. Residues 88–108 (ILFWLTVASVLVLIAATIAII) form a helical; Signal-anchor for type II membrane protein membrane-spanning segment. The Extracellular portion of the chain corresponds to 109–685 (ALSPKCLDWW…SVLNILYTSC (577 aa)). Asn-214 contacts Ca(2+). 2 N-linked (GlcNAc...) asparagine glycosylation sites follow: Asn-214 and Asn-261. Cysteines 242 and 273 form a disulfide. Ca(2+) contacts are provided by Asp-284, Phe-318, Leu-319, and Glu-321. Residues Asn-332, Asn-495, Asn-513, and Asn-575 are each glycosylated (N-linked (GlcNAc...) asparagine). 2 disulfides stabilise this stretch: Cys-571–Cys-666 and Cys-673–Cys-685.

As to quaternary structure, disulfide-linked heterodimer composed of the catalytic light subunit SLC7A9 and the heavy subunit SLC3A1. The heterodimer is the minimal functional unit. Assembles in non-covalently linked heterotetramers (dimers of heterodimers) and higher order oligomers; the oligomerization is mediated by SLC3A1 likely to prevent degradation in the endoplasmic reticulum and facilitate heteromer trafficking to the plasma membrane. Disulfide-linked heterodimer composed of the catalytic light subunit SLC7A13 and the heavy subunit SLC3A1. Expressed in the brush border membrane in the kidney (at protein level). Predominantly expressed in the kidney, small intestine and pancreas. Weakly expressed in liver.

The protein localises to the cell membrane. Its subcellular location is the apical cell membrane. Its function is as follows. Acts as a chaperone that facilitates biogenesis and trafficking of functional transporter heteromers to the plasma membrane. Associates with SLC7A9 to form a functional transporter complex that mediates the electrogenic exchange between cationic amino acids and neutral amino acids, with a stoichiometry of 1:1. SLC7A9-SLC3A1 transporter has system b(0,+)-like activity with high affinity for extracellular cationic amino acids and L-cystine and lower affinity for intracellular neutral amino acids. Substrate exchange is driven by high concentration of intracellular neutral amino acids and the intracellular reduction of L-cystine to L-cysteine. SLC7A9-SLC3A1 acts as a major transporter for reabsorption of L-cystine and dibasic amino acids across the brush border membrane in early proximal tubules. Associates with SLC7A13 to form a functional complex that transports anionic and neutral amino acids via exchange or facilitated diffusion. SLC7A13-SLC3A1 may act as a major transporter for L-cystine in late proximal tubules, ensuring its reabsorption from the luminal fluid in exchange for cytosolic L-glutamate or L-aspartate. The sequence is that of Amino acid transporter heavy chain SLC3A1 from Homo sapiens (Human).